The following is a 176-amino-acid chain: Ribosome maturation factor RimM (176 aa).

Residues 93-168 form the PRC barrel domain; the sequence is DDEVYIEDIL…TIRITPPPGL (76 aa).

The protein belongs to the RimM family. Binds ribosomal protein uS19.

It localises to the cytoplasm. Its function is as follows. An accessory protein needed during the final step in the assembly of 30S ribosomal subunit, possibly for assembly of the head region. Essential for efficient processing of 16S rRNA. May be needed both before and after RbfA during the maturation of 16S rRNA. It has affinity for free ribosomal 30S subunits but not for 70S ribosomes. The protein is Ribosome maturation factor RimM of Oleidesulfovibrio alaskensis (strain ATCC BAA-1058 / DSM 17464 / G20) (Desulfovibrio alaskensis).